A 154-amino-acid polypeptide reads, in one-letter code: 3-hydroxyacyl-[acyl-carrier-protein] dehydratase FabZ (154 aa).

Histidine 60 is a catalytic residue.

The protein belongs to the thioester dehydratase family. FabZ subfamily.

The protein localises to the cytoplasm. The catalysed reaction is a (3R)-hydroxyacyl-[ACP] = a (2E)-enoyl-[ACP] + H2O. Functionally, involved in unsaturated fatty acids biosynthesis. Catalyzes the dehydration of short chain beta-hydroxyacyl-ACPs and long chain saturated and unsaturated beta-hydroxyacyl-ACPs. This Synechococcus sp. (strain CC9311) protein is 3-hydroxyacyl-[acyl-carrier-protein] dehydratase FabZ.